The chain runs to 451 residues: Phosphoglucosamine mutase (451 aa).

Residue S102 is the Phosphoserine intermediate of the active site. Residues S102, D243, D245, and D247 each contribute to the Mg(2+) site. At S102 the chain carries Phosphoserine.

The protein belongs to the phosphohexose mutase family. The cofactor is Mg(2+). Post-translationally, activated by phosphorylation.

It carries out the reaction alpha-D-glucosamine 1-phosphate = D-glucosamine 6-phosphate. Catalyzes the conversion of glucosamine-6-phosphate to glucosamine-1-phosphate. In Salinispora arenicola (strain CNS-205), this protein is Phosphoglucosamine mutase.